Consider the following 158-residue polypeptide: Transcription factor BTF3 homolog 4 (158 aa).

Residue lysine 5 is modified to N6-methyllysine. The 66-residue stretch at 33-98 folds into the NAC-A/B domain; it reads TADDKKLQSS…AEAKPITEML (66 aa). The residue at position 111 (threonine 111) is a Phosphothreonine. The interval 122–158 is disordered; that stretch reads RQVLDSKAPKPEDIDEEDDDVPDLVENFDEASKNEAN. Over residues 134–150 the composition is skewed to acidic residues; sequence DIDEEDDDVPDLVENFD.

This sequence belongs to the NAC-beta family.

The polypeptide is Transcription factor BTF3 homolog 4 (BTF3L4) (Homo sapiens (Human)).